A 2701-amino-acid chain; its full sequence is Centromere-associated protein E (2701 aa).

The region spanning 6 to 329 is the Kinesin motor domain; the sequence is AVAVCVRVRP…LQFASTAKYM (324 aa). 86 to 93 is an ATP binding site; sequence GQTASGKT. Residues 336-2590 adopt a coiled-coil conformation; it reads NEVSTDEALL…SNEVKTWKER (2255 aa). Phosphoserine occurs at positions 611 and 2083. The interval 2126-2476 is kinetochore-binding domain; that stretch reads KEIEFQKELS…IDLEKMKNAK (351 aa). Residues 2355–2376 form a disordered region; it reads SGAQVNPTTQDNKNPHVTSRAT. Residue S2389 is modified to Phosphoserine. Over residues 2508-2527 the composition is skewed to polar residues; the sequence is QAQDTSVISEHTDPQPSNKP. Disordered stretches follow at residues 2508 to 2533 and 2588 to 2701; these read QAQD…CGGG and KERT…CKTQ. Residues 2510–2698 are globular autoinhibitory domain; that stretch reads QDTSVISEHT…ASSGKDVPEC (189 aa). The segment covering 2588-2600 has biased composition (basic and acidic residues); the sequence is KERTLKREAHKQV. The span at 2601-2625 shows a compositional bias: polar residues; it reads TCENSPKSPKVTGTASKKKQITPSQ. The segment covering 2626 to 2640 has biased composition (basic and acidic residues); sequence CKERNLQDPVPKESP. Residues S2639, S2647, and S2651 each carry the phosphoserine modification. The residue at position 2698 (C2698) is a Cysteine methyl ester. The S-farnesyl cysteine moiety is linked to residue C2698. The propeptide at 2699 to 2701 is removed in mature form; it reads KTQ.

Belongs to the TRAFAC class myosin-kinesin ATPase superfamily. Kinesin family. As to quaternary structure, monomer. Interacts with CENPF. Interacts with BUB1B. Interacts with SEPT7. Interacts with KIF18A. Interacts with PRC1. Interacts with NUF2; this interaction determines kinetochore localization. Interacts with SKAP; this interaction greatly favors SKAP binding to microtubules. Interacts with TRAPPC12. Interacts with CTCF. In terms of processing, the C-terminal inhibitory domain is phosphorylated. Phosphorylation relieves autoinhibition of the kinetochore motor. Post-translationally, sumoylated with SUMO2 and SUMO3. The sumoylation mediates the association to the kinetochore.

The protein localises to the chromosome. Its subcellular location is the centromere. It localises to the kinetochore. The protein resides in the cytoplasm. It is found in the cytoskeleton. The protein localises to the spindle. Its function is as follows. Microtubule plus-end-directed kinetochore motor which plays an important role in chromosome congression, microtubule-kinetochore conjugation and spindle assembly checkpoint activation. Drives chromosome congression (alignment of chromosomes at the spindle equator resulting in the formation of the metaphase plate) by mediating the lateral sliding of polar chromosomes along spindle microtubules towards the spindle equator and by aiding the establishment and maintenance of connections between kinetochores and spindle microtubules. The transport of pole-proximal chromosomes towards the spindle equator is favored by microtubule tracks that are detyrosinated. Acts as a processive bi-directional tracker of dynamic microtubule tips; after chromosomes have congressed, continues to play an active role at kinetochores, enhancing their links with dynamic microtubule ends. Suppresses chromosome congression in NDC80-depleted cells and contributes positively to congression only when microtubules are stabilized. Plays an important role in the formation of stable attachments between kinetochores and spindle microtubules The stabilization of kinetochore-microtubule attachment also requires CENPE-dependent localization of other proteins to the kinetochore including BUB1B, MAD1 and MAD2. Plays a role in spindle assembly checkpoint activation (SAC) via its interaction with BUB1B resulting in the activation of its kinase activity, which is important for activating SAC. Necessary for the mitotic checkpoint signal at individual kinetochores to prevent aneuploidy due to single chromosome loss. This is Centromere-associated protein E (CENPE) from Homo sapiens (Human).